A 522-amino-acid chain; its full sequence is Nif-specific regulatory protein (522 aa).

An a domain region spans residues 1-184; it reads MNATIPQRSA…AQTVRLVVNI (184 aa). The GAF domain maps to 37–178; sequence QIDELLEQVL…IVANLLAQTV (142 aa). Residues 211 to 439 enclose the Sigma-54 factor interaction domain; sequence VVGHTPTMRR…LENCLERSAI (229 aa). ATP-binding positions include 239–246 and 302–311; these read GESGTGKE and ADGGTLFLDE. Residues 440–479 form an inter-domain linker region; that stretch reads MSEDGTITRDVVSLTGVDNESPPLAAPLPEVNLADETLDD. Residues 480-522 form a C-terminal DNA-binding domain region; sequence RERVIAALEQAGWVQAKAARLLGMTPRQIAYRIQTLNIHMRKI. Positions 494–513 form a DNA-binding region, H-T-H motif; the sequence is QAKAARLLGMTPRQIAYRIQ.

In terms of assembly, interacts with sigma-54.

Required for activation of most nif operons, which are directly involved in nitrogen fixation. The sequence is that of Nif-specific regulatory protein (nifA) from Azotobacter vinelandii.